The chain runs to 491 residues: MTDLTSLTLAEARKGLADKTFTSLELTDAHLKAIEAARALNAFVMETPDQARAMARDADARIGKGEGGPLAGIPLGIKDLFATKDVRTTACSKILGNFVPTYESTVTAQLWRDGAVMLGKLNNDEFAMGSSNETSCFGPVGNPWRREGSNTTLVPGGSSGGSASAVAALLCMGATATDTGGSIRQPAAFTATVGIKPTYGRCSRWGIVAFASSLDQAGPIARTTRDAAILLRSMAGHDPKDTTSVDIPVPDYEAAIGKSVKGMKIGIPKEYRLDGMPAEIEKLWSEGAAWLKAAGAELVEVSLPHTKYALPAYYIVAPAEASSNLARYDGVRYGLRVPGKSIGELYENTRAEGFGAEVRRRVMIGTYVLSAGYYDAYYIRAQKVRTLIKRDFEDCFAKGVSAILTPATPSAAFGVGEKGGADPVEMYLNDIFTVTVNMAGLPGIAVPAGKDSQGLPLGLQLIGRPFDEETLFSLGEVIEQAAGRFTPVRWW.

Active-site charge relay system residues include Lys78 and Ser158. Ser182 functions as the Acyl-ester intermediate in the catalytic mechanism.

It belongs to the amidase family. GatA subfamily. Heterotrimer of A, B and C subunits.

It carries out the reaction L-glutamyl-tRNA(Gln) + L-glutamine + ATP + H2O = L-glutaminyl-tRNA(Gln) + L-glutamate + ADP + phosphate + H(+). Functionally, allows the formation of correctly charged Gln-tRNA(Gln) through the transamidation of misacylated Glu-tRNA(Gln) in organisms which lack glutaminyl-tRNA synthetase. The reaction takes place in the presence of glutamine and ATP through an activated gamma-phospho-Glu-tRNA(Gln). This chain is Glutamyl-tRNA(Gln) amidotransferase subunit A, found in Bradyrhizobium sp. (strain ORS 278).